The chain runs to 162 residues: Phosphopantetheine adenylyltransferase (162 aa).

Ser-11 is a binding site for substrate. ATP contacts are provided by residues 11 to 12 (SF) and His-19. 3 residues coordinate substrate: Lys-43, Leu-75, and Arg-89. Residues 90 to 92 (GLR), Glu-100, and 125 to 131 (FSYISSS) each bind ATP.

The protein belongs to the bacterial CoaD family. In terms of assembly, homohexamer. It depends on Mg(2+) as a cofactor.

The protein localises to the cytoplasm. The enzyme catalyses (R)-4'-phosphopantetheine + ATP + H(+) = 3'-dephospho-CoA + diphosphate. The protein operates within cofactor biosynthesis; coenzyme A biosynthesis; CoA from (R)-pantothenate: step 4/5. Reversibly transfers an adenylyl group from ATP to 4'-phosphopantetheine, yielding dephospho-CoA (dPCoA) and pyrophosphate. In Petrotoga mobilis (strain DSM 10674 / SJ95), this protein is Phosphopantetheine adenylyltransferase.